Here is a 1009-residue protein sequence, read N- to C-terminus: Translation initiation factor IF-2 (1009 aa).

A disordered region spans residues 1–415 (MSDENENGRP…EREKEKRRGG (415 aa)). Positions 94 to 110 (EELRARQRVVDAAREAQ) are enriched in basic and acidic residues. Positions 111 to 121 (ARQVAEQAAAE) are enriched in low complexity. The segment covering 122–136 (ARARAAQEAAQREAA) has biased composition (basic and acidic residues). The segment covering 137-146 (AKAAAERAAA) has biased composition (low complexity). The span at 147–174 (APPPVAQAPAAPAPAAPVTPPPAAPQAP) shows a compositional bias: pro residues. Positions 175–189 (RPVAQAPVAPSAPRQ) are enriched in low complexity. Basic and acidic residues-rich tracts occupy residues 208–218 (EPSRDRRDDRP) and 251–287 (PRPE…RPQG). Residues 311–320 (GGPPRGPRPG) show a composition bias toward pro residues. Basic and acidic residues-rich tracts occupy residues 346 to 358 (MDRR…DRRK) and 403 to 415 (RARE…RRGG). The tr-type G domain occupies 505 to 675 (LRPPVVTIMG…LLQAEVLDLK (171 aa)). The segment at 514–521 (GHVDHGKT) is G1. 514–521 (GHVDHGKT) is a GTP binding site. Residues 539–543 (GITQH) are G2. Positions 561–564 (DTPG) are G3. Residues 561-565 (DTPGH) and 615-618 (NKMD) contribute to the GTP site. A G4 region spans residues 615–618 (NKMD). The G5 stretch occupies residues 651–653 (SAK).

This sequence belongs to the TRAFAC class translation factor GTPase superfamily. Classic translation factor GTPase family. IF-2 subfamily.

It is found in the cytoplasm. Its function is as follows. One of the essential components for the initiation of protein synthesis. Protects formylmethionyl-tRNA from spontaneous hydrolysis and promotes its binding to the 30S ribosomal subunits. Also involved in the hydrolysis of GTP during the formation of the 70S ribosomal complex. The polypeptide is Translation initiation factor IF-2 (Caulobacter vibrioides (strain ATCC 19089 / CIP 103742 / CB 15) (Caulobacter crescentus)).